We begin with the raw amino-acid sequence, 197 residues long: Histone chaperone asf1b-B (197 aa).

Belongs to the ASF1 family. Interacts with histone H3 and histone H4.

It localises to the nucleus. In terms of biological role, histone chaperone that facilitates histone deposition and histone exchange and removal during nucleosome assembly and disassembly. This chain is Histone chaperone asf1b-B (asf1bb), found in Danio rerio (Zebrafish).